The sequence spans 533 residues: Beta-apo-4'-carotenal oxygenase (533 aa).

Active-site residues include E226 and C260.

This sequence belongs to the aldehyde dehydrogenase family.

It carries out the reaction 4'-apo-beta-carotenal + NAD(+) + H2O = neurosporaxanthin + NADH + 2 H(+). Beta-apo-4'-carotenal oxygenase involved in the last step of synthesis of neurosporaxanthin, a carboxylic apocarotenoid acting as an essential protective pigment and leading to orange pigmentation. Converts the aldehyde beta-apo-4'-carotenal into neurosporaxanthin. Neurosporaxanthin is synthesized from geranyl-geranyl pyrophosphate (GGPP) through several enzymatic activities. Phytoene synthase activity performed by the bifunctional enzyme al-2 first produces phytoene from geranyl-geranyl pyrophosphate (GGPP). The phytoene dehydrogenase al-1 then introduces 5 desaturations to lead to 3,4-didehydrolycopene via the intermediates phytofluene, zeta-carotene, neurosporene and lycopene. Al-2 cyclase activity then converts 3,4-didehydrolycopene into torulene. Al-2 can also convet lycopene into gamma-carotene which in turn is converted to beta-carotene by an additional al-2 cyclization reaction. Torulene is the substrate of the dioxidase cao-2 that breaks the molecule, removing five carbon atoms to yield beta-apo-4'-carotenal, whereas the aldehyde dehydrogenase ylo-1 mediates the last step by converting beta-apo-4'-carotenal into neurosporaxanthin. The sequence is that of Beta-apo-4'-carotenal oxygenase from Neurospora crassa (strain ATCC 24698 / 74-OR23-1A / CBS 708.71 / DSM 1257 / FGSC 987).